The following is a 315-amino-acid chain: tRNA pseudouridine synthase B (315 aa).

The Nucleophile role is filled by Asp-54.

The protein belongs to the pseudouridine synthase TruB family. Type 1 subfamily.

It carries out the reaction uridine(55) in tRNA = pseudouridine(55) in tRNA. Its function is as follows. Responsible for synthesis of pseudouridine from uracil-55 in the psi GC loop of transfer RNAs. The protein is tRNA pseudouridine synthase B of Agrobacterium fabrum (strain C58 / ATCC 33970) (Agrobacterium tumefaciens (strain C58)).